Here is a 357-residue protein sequence, read N- to C-terminus: tRNA N6-adenosine threonylcarbamoyltransferase (357 aa).

Fe cation is bound by residues H116 and H120. Substrate is bound by residues 139–143 (LVSGG), D172, G185, and N284. A Fe cation-binding site is contributed by D312.

The protein belongs to the KAE1 / TsaD family. It depends on Fe(2+) as a cofactor.

The protein resides in the cytoplasm. The enzyme catalyses L-threonylcarbamoyladenylate + adenosine(37) in tRNA = N(6)-L-threonylcarbamoyladenosine(37) in tRNA + AMP + H(+). Functionally, required for the formation of a threonylcarbamoyl group on adenosine at position 37 (t(6)A37) in tRNAs that read codons beginning with adenine. Is involved in the transfer of the threonylcarbamoyl moiety of threonylcarbamoyl-AMP (TC-AMP) to the N6 group of A37, together with TsaE and TsaB. TsaD likely plays a direct catalytic role in this reaction. This chain is tRNA N6-adenosine threonylcarbamoyltransferase, found in Synechococcus sp. (strain CC9902).